An 801-amino-acid chain; its full sequence is Protein SDA1 homolog (801 aa).

Disordered stretches follow at residues 1–40 (MGKV…ASRF), 495–517 (RKDR…FARP), 536–647 (GEQG…SKNS), and 739–801 (DYKF…RKPQ). Over residues 24–40 (KSNAPTEGSNSGKASRF) the composition is skewed to polar residues. Composition is skewed to acidic residues over residues 544 to 568 (DGTD…DADE) and 583 to 633 (NDAE…EASE). 2 stretches are compositionally biased toward basic residues: residues 770–779 (NKIRGRNRQR) and 787–801 (SLRH…RKPQ).

This sequence belongs to the SDA1 family.

The protein resides in the nucleus. Its function is as follows. Required for 60S pre-ribosomal subunits export to the cytoplasm. Required for normal somatic gonad development and for regulation of germline development and proliferation. This chain is Protein SDA1 homolog (pro-3), found in Caenorhabditis elegans.